Here is a 179-residue protein sequence, read N- to C-terminus: Peptide deformylase (179 aa).

Fe cation is bound by residues Cys102 and His144. Glu145 is an active-site residue. Residue His148 coordinates Fe cation.

The protein belongs to the polypeptide deformylase family. It depends on Fe(2+) as a cofactor.

It catalyses the reaction N-terminal N-formyl-L-methionyl-[peptide] + H2O = N-terminal L-methionyl-[peptide] + formate. In terms of biological role, removes the formyl group from the N-terminal Met of newly synthesized proteins. Requires at least a dipeptide for an efficient rate of reaction. N-terminal L-methionine is a prerequisite for activity but the enzyme has broad specificity at other positions. The chain is Peptide deformylase from Wolbachia sp. subsp. Brugia malayi (strain TRS).